The primary structure comprises 333 residues: Phosphate acetyltransferase (333 aa).

This sequence belongs to the phosphate acetyltransferase and butyryltransferase family.

Its subcellular location is the cytoplasm. The enzyme catalyses acetyl-CoA + phosphate = acetyl phosphate + CoA. The protein operates within metabolic intermediate biosynthesis; acetyl-CoA biosynthesis; acetyl-CoA from acetate: step 2/2. This chain is Phosphate acetyltransferase (pta), found in Clostridium acetobutylicum (strain ATCC 824 / DSM 792 / JCM 1419 / IAM 19013 / LMG 5710 / NBRC 13948 / NRRL B-527 / VKM B-1787 / 2291 / W).